A 623-amino-acid chain; its full sequence is Prothrombin (623 aa).

Positions 1 to 24 (MAHVRGLQLPGCLALAALCTLVHS) are cleaved as a signal peptide. The propeptide occupies 25–43 (QHVFLAPQQALSLLQRVRR). The region spanning 44–90 (ANSVFLEEVRKGNLERECVEETCSYEEAFEALESSTATDVFWAKYTA) is the Gla domain. 10 positions are modified to 4-carboxyglutamate: Glu-50, Glu-51, Glu-58, Glu-60, Glu-63, Glu-64, Glu-69, Glu-70, Glu-73, and Glu-76. A disulfide bond links Cys-61 and Cys-66. 11 disulfides stabilise this stretch: Cys-91-Cys-104, Cys-109-Cys-187, Cys-130-Cys-170, Cys-158-Cys-182, Cys-214-Cys-292, Cys-235-Cys-275, Cys-263-Cys-287, Cys-337-Cys-483, Cys-392-Cys-408, Cys-537-Cys-551, and Cys-565-Cys-595. Kringle domains are found at residues 108–187 (NCAE…IPVC) and 213–292 (QCVP…LNYC). N-linked (GlcNAc...) asparagine glycosylation is found at Asn-122 and Asn-144. A Peptidase S1 domain is found at 365 to 619 (IVEGSDAEIG…LKKWIQKVID (255 aa)). The active-site Charge relay system is His-407. Asn-417 is a glycosylation site (N-linked (GlcNAc...) asparagine). Asp-463 serves as the catalytic Charge relay system. Residues 552 to 574 (AGYKPDEGKRGDACEGDSGGPFV) form a high affinity receptor-binding region which also known as the TP508 peptide region. Residue Ser-569 is the Charge relay system of the active site.

Belongs to the peptidase S1 family. Heterodimer (named alpha-thrombin) of a light and a heavy chain; disulfide-linked. Forms a heterodimer with SERPINA5. In plasma, interacts (via N-terminus) with alpha-1-microglobulin; this interaction does not prevent the activation of prothrombin to thrombin. Post-translationally, the gamma-carboxyglutamyl residues, which bind calcium ions, result from the carboxylation of glutamyl residues by a microsomal enzyme, the vitamin K-dependent carboxylase. The modified residues are necessary for the calcium-dependent interaction with a negatively charged phospholipid surface, which is essential for the conversion of prothrombin to thrombin. In terms of processing, in the penultimate step of the coagulation cascade, prothrombin is converted to thrombin by the prothrombinase complex composed of factor Xa (F10), cofactor Va (F5), and phospholipids. This activation requires factor Xa-catalyzed sequential cleavage at 2 sites, Arg-315 and Arg-364, along 2 possible pathways. In the first pathway, the first cleavage occurs at Arg-315, leading to the formation of the inactive intermediate prethrombin-2. This pathway preferentially occurs on platelets and in the absence of cofactor Va. In the second pathway, the first cleavage occurs at Arg-364, which separates protease domain into 2 chains that remain connected through a disulfide bond and generates the active intermediate meizothrombin. The presence of cofactor Va directs activation along the meizothrombin pathway and greatly accelerates the rate of cleavage at Arg-364, but has a smaller effect on the cleavage of meizothrombin at Arg-315. Meizothrombin accumulates as an intermediate when prothrombinase is assembled on the membrane of red blood cells.

It catalyses the reaction Selective cleavage of Arg-|-Gly bonds in fibrinogen to form fibrin and release fibrinopeptides A and B.. Its activity is regulated as follows. Activity is promoted in the presence of negatively charged surfaces, such as polyphosphate and dextran sulfate. Inhibited by SERPINA5. In terms of biological role, thrombin, which cleaves bonds after Arg and Lys, converts fibrinogen to fibrin and activates factors V, VII, VIII, XIII, and, in complex with thrombomodulin, protein C. Functions in blood homeostasis, inflammation and wound healing. Activates coagulation factor XI (F11); activation is promoted by the contact with negatively charged surfaces. Triggers the production of pro-inflammatory cytokines, such as MCP-1/CCL2 and IL8/CXCL8, in endothelial cells. This is Prothrombin (F2) from Pongo abelii (Sumatran orangutan).